The chain runs to 70 residues: Large ribosomal subunit protein bL31 (70 aa).

Zn(2+) is bound by residues Cys-16, Cys-18, Cys-37, and Cys-40.

This sequence belongs to the bacterial ribosomal protein bL31 family. Type A subfamily. Part of the 50S ribosomal subunit. Zn(2+) is required as a cofactor.

Its function is as follows. Binds the 23S rRNA. This Erwinia tasmaniensis (strain DSM 17950 / CFBP 7177 / CIP 109463 / NCPPB 4357 / Et1/99) protein is Large ribosomal subunit protein bL31.